The sequence spans 460 residues: MALWGGRFTQAADQRFKDFNDSLRFDYRLAEQDIEGSVGWSKALVSVGVLTTDEQQQLERALNELLIEVRSNPQAILQDDAEDIHSWVESKLIDKVGNLGKKLHTGRSRNDQVALDIKMWCKAQVTELQYAVRDLQAKLVETAENNQHAVMPGYTHLQRAQPISFAHWCMAYVEMLERDYSRLADAYNRMDSCPLGSGALAGTAYPVDREQLAKDLGFAFATRNSLDSVSDRDHIIELLSTASLSMVHLSRFAEDMIIFNSGEADFVELSDRVTSGSSLMPQKKNPDACELIRGKAGRVIGSLTGMMVTVKGLPLAYNKDMQEDKEGIFDALDTWHDCLTMAAFVLEDIRVNVERTREAALKGYSNATELADYLVAKGVPFRDSHHIVGETVVYAIKVHKGLEDLSIEEFRQFSDVVGEDVYPILSLQSCLDKRSAKGGVSPLRVAEAIADAKARIAAKK.

Belongs to the lyase 1 family. Argininosuccinate lyase subfamily.

The protein localises to the cytoplasm. The catalysed reaction is 2-(N(omega)-L-arginino)succinate = fumarate + L-arginine. It functions in the pathway amino-acid biosynthesis; L-arginine biosynthesis; L-arginine from L-ornithine and carbamoyl phosphate: step 3/3. The sequence is that of Argininosuccinate lyase from Mannheimia succiniciproducens (strain KCTC 0769BP / MBEL55E).